Consider the following 293-residue polypeptide: uncharacterized protein (293 aa).

This is an uncharacterized protein from Bos taurus (Bovine).